The sequence spans 2488 residues: Neuron navigator 2 (2488 aa).

The Calponin-homology (CH) domain occupies 85-192 (GFDTQIYTDW…LFFSLSRYKQ (108 aa)). 3 stretches are compositionally biased toward low complexity: residues 194–204 (QQQPQKQHLSS), 221–247 (QAGT…PHQQ), and 255–267 (QSSA…SQSK). Disordered stretches follow at residues 194-675 (QQQP…GSNT) and 706-727 (TEGN…SHFT). Polar residues predominate over residues 299-315 (GGSTTANNRRSQSFNNY). Over residues 356 to 369 (SGSSSTPTNCSTSS) the composition is skewed to low complexity. The segment covering 384-396 (KSLSVKHSATVSM) has biased composition (polar residues). Pro residues predominate over residues 401–410 (PPGPEAPRPT). Polar residues predominate over residues 492–506 (RTFSRALTNKKSSLK). Residues 498 to 531 (LTNKKSSLKGNEKEKEKQQREKDKEKSKDLAKRA) adopt a coiled-coil conformation. Basic and acidic residues predominate over residues 507–547 (GNEKEKEKQQREKDKEKSKDLAKRASVTERLDLKEEPKEDP). The span at 592-606 (MKSMPGKSPSAPAPS) shows a compositional bias: low complexity. Polar residues predominate over residues 615–626 (GKLSSGLPQQKP). Low complexity-rich tracts occupy residues 633–642 (SSSSSSLASS) and 657–675 (SSQT…GSNT). Residues 706 to 719 (TEGNVTAESSSTGV) show a composition bias toward polar residues. A coiled-coil region spans residues 743 to 771 (EARRLRTVKNIADLRQNLEETMSSLRGTQ). Disordered stretches follow at residues 804–824 (LSWR…PSMG), 939–1151 (LGLG…QSGS), 1177–1200 (KSSA…NQDD), 1213–1283 (YRSL…SDNE), 1295–1338 (PAAQ…PIAT), 1355–1412 (MTQQ…TNAS), 1440–1460 (SLSS…ASSK), 1473–1560 (VKTT…VTSP), and 1591–1629 (SLSN…SFRD). The span at 939-985 (LGLGDADSWDDSSSVSSGISDTIDNLSTDDINTSSSISSYANTPASS) shows a compositional bias: low complexity. The segment covering 1091-1102 (KTDDAKVSEKGR) has biased composition (basic and acidic residues). The segment covering 1130 to 1142 (PSSSRTPTANANS) has biased composition (polar residues). Residues 1220-1245 (SKSNSRNGAGNRSSTSSIDSNISSKS) are compositionally biased toward low complexity. The span at 1299–1309 (PVSSPAQTSLQ) shows a compositional bias: polar residues. Low complexity-rich tracts occupy residues 1363–1380 (SPSG…PLYS) and 1388–1404 (SPLA…PSNS). Polar residues predominate over residues 1440-1456 (SLSSGGVPSHNSSTGLI). Positions 1477–1489 (LSESPLSSPAASP) are enriched in low complexity. 3 positions are modified to phosphoserine: Ser1480, Ser1484, and Ser1488. Composition is skewed to basic and acidic residues over residues 1498–1510 (RKQD…DRNT) and 1526–1535 (TQEDAKEWLR). Over residues 1549 to 1560 (SPFSSGSSVTSP) the composition is skewed to low complexity. The stretch at 1686–1773 (EEKCQSEIRK…AAAQAAINGV (88 aa)) forms a coiled coil. Disordered regions lie at residues 1790–1887 (ADLR…LRNS) and 1951–1985 (AEND…MGLS). Polar residues-rich tracts occupy residues 1800–1820 (SDSV…SNIE), 1875–1887 (NGST…LRNS), and 1959–1985 (ESQG…MGLS). A coiled-coil region spans residues 1897–1964 (MDSEAETVMQ…RLKSESQGSG (68 aa)). Position 1977 is a phosphoserine (Ser1977). 2157-2164 (GPSGTGKT) contacts ATP. A disordered region spans residues 2423 to 2488 (DGYSMPREGS…ILDSSLESTL (66 aa)). The span at 2460–2473 (YSSPQSYDSDSNSN) shows a compositional bias: low complexity.

Belongs to the Nav/unc-53 family. In terms of tissue distribution, highly expressed in the brain, kidney and liver. Also expressed in the thyroid, mammary gland, spinal cord, heart, placenta and lung. Abundantly expressed in colon cancers.

It localises to the nucleus. The catalysed reaction is ATP + H2O = ADP + phosphate + H(+). Possesses 3' to 5' helicase activity and exonuclease activity. Involved in neuronal development, specifically in the development of different sensory organs. This chain is Neuron navigator 2 (NAV2), found in Homo sapiens (Human).